The chain runs to 333 residues: Forkhead box protein unc-130 (333 aa).

The tract at residues 1 to 126 is disordered; it reads MLFSMESILS…MSGHRKSSHA (126 aa). Residues 14-24 are compositionally biased toward basic and acidic residues; it reads PKLEPPPKLEP. A compositionally biased stretch (polar residues) spans 37–50; sequence RSNTRLSEPSTSAS. The segment covering 52-62 has biased composition (basic and acidic residues); that stretch reads LEHDLKFGESR. The span at 98–110 shows a compositional bias: acidic residues; that stretch reads SSDDAKDDDDDDD. The segment at residues 127-221 is a DNA-binding region (fork-head); that stretch reads KPPYSYIALI…DNGSFLRRRK (95 aa). The interval 304 to 333 is disordered; that stretch reads APVSSGQKRTSSSSSPNENGSSAVSDKLSA. Low complexity predominate over residues 307 to 333; sequence SSGQKRTSSSSSPNENGSSAVSDKLSA.

Expressed in ventral body wall muscle. Expressed in the structural cells and two neurons of each ray in the male tail.

It is found in the nucleus. Functionally, probable transcription factor. Binds to DNA sequence motif 5'-CTGTTTCA-3'. Required for the migration of distal tip cells (DTC) and axonal growth-cones along the dorsal-ventral axis of the body wall, acting by cell autonomous repression of unc-129/TGF-beta expression in ventral body muscle during embyogenesis. Binds to the promoter region of the unc-129 gene. Plays a role in dorsal-ventral patterning and fate specification of the postembryonic mesoderm. Involved in male tail morphogenesis and in embryogenesis. Plays a role in the development of sensory neurons and is required to repress AWA fate and promote ASG fate in the ASG chemosensory neurons. Regulates expression of a class of small RNAs, known as 21U-RNAs. The polypeptide is Forkhead box protein unc-130 (Caenorhabditis elegans).